Here is a 118-residue protein sequence, read N- to C-terminus: Large ribosomal subunit protein uL18 (118 aa).

Belongs to the universal ribosomal protein uL18 family. As to quaternary structure, part of the 50S ribosomal subunit; part of the 5S rRNA/L5/L18/L25 subcomplex. Contacts the 5S and 23S rRNAs.

In terms of biological role, this is one of the proteins that bind and probably mediate the attachment of the 5S RNA into the large ribosomal subunit, where it forms part of the central protuberance. In Zymomonas mobilis subsp. mobilis (strain ATCC 31821 / ZM4 / CP4), this protein is Large ribosomal subunit protein uL18.